A 1024-amino-acid polypeptide reads, in one-letter code: Multidrug resistance protein MdtC (1024 aa).

The next 12 helical transmembrane spans lie at 12–32 (VATTLLTLAITLSGIIGFSLL), 333–353 (EVERSLVIAVALVILVVFIFL), 360–380 (LIPAVAVPVSLIGTFAAMYLC), 387–407 (LSLMALTIATGFVVDDAIVVL), 435–455 (VLSMSISLVAVFIPLLLMAGL), 469–489 (VAIGISLVISLTLTPMMCAWL), 528–548 (WVMVVLLSTIALNVWLYISIP), 853–873 (LWLIMAAIATVYIVLGILYES), 875–895 (VHPLTILSTLPSAGVGALLAL), 897–917 (LFDAPFSLIALIGIMLLIGIV), 953–973 (PIIMTTLAALFGALPLVLSSG), and 984–1004 (ITIVGGLVVSQLLTLYTTPVI).

The protein belongs to the resistance-nodulation-cell division (RND) (TC 2.A.6) family. MdtC subfamily. As to quaternary structure, part of a tripartite efflux system composed of MdtA, MdtB and MdtC. MdtC forms a heteromultimer with MdtB.

Its subcellular location is the cell inner membrane. This chain is Multidrug resistance protein MdtC, found in Yersinia pseudotuberculosis serotype O:1b (strain IP 31758).